The following is a 300-amino-acid chain: 4-hydroxy-tetrahydrodipicolinate synthase (300 aa).

Thr45 is a pyruvate binding site. Catalysis depends on Tyr140, which acts as the Proton donor/acceptor. The active-site Schiff-base intermediate with substrate is the Lys169. Residue Val210 coordinates pyruvate.

The protein belongs to the DapA family. As to quaternary structure, homotetramer; dimer of dimers.

The protein resides in the cytoplasm. The catalysed reaction is L-aspartate 4-semialdehyde + pyruvate = (2S,4S)-4-hydroxy-2,3,4,5-tetrahydrodipicolinate + H2O + H(+). It participates in amino-acid biosynthesis; L-lysine biosynthesis via DAP pathway; (S)-tetrahydrodipicolinate from L-aspartate: step 3/4. In terms of biological role, catalyzes the condensation of (S)-aspartate-beta-semialdehyde [(S)-ASA] and pyruvate to 4-hydroxy-tetrahydrodipicolinate (HTPA). This chain is 4-hydroxy-tetrahydrodipicolinate synthase, found in Helicobacter acinonychis (strain Sheeba).